A 304-amino-acid chain; its full sequence is Non-specific ribonucleoside hydrolase RihC (304 aa).

H233 is a catalytic residue.

It belongs to the IUNH family. RihC subfamily.

In terms of biological role, hydrolyzes both purine and pyrimidine ribonucleosides with a broad-substrate specificity. The protein is Non-specific ribonucleoside hydrolase RihC of Escherichia coli O8 (strain IAI1).